A 271-amino-acid polypeptide reads, in one-letter code: Glutamate racemase (271 aa).

Substrate contacts are provided by residues 10–11 and 42–43; these read DS and YG. Cysteine 74 serves as the catalytic Proton donor/acceptor. 75-76 provides a ligand contact to substrate; sequence NT. The active-site Proton donor/acceptor is the cysteine 189. 190–191 contacts substrate; sequence TH.

This sequence belongs to the aspartate/glutamate racemases family.

The enzyme catalyses L-glutamate = D-glutamate. Its pathway is cell wall biogenesis; peptidoglycan biosynthesis. Functionally, provides the (R)-glutamate required for cell wall biosynthesis. The protein is Glutamate racemase of Bartonella bacilliformis (strain ATCC 35685 / KC583 / Herrer 020/F12,63).